A 479-amino-acid polypeptide reads, in one-letter code: Deoxyribodipyrimidine photo-lyase (479 aa).

The 127-residue stretch at 6–132 (APVIVWFRKD…TVRSFSGQLL (127 aa)) folds into the Photolyase/cryptochrome alpha/beta domain. Tyr-226 contacts FAD. Residue Arg-230 coordinates DNA. Residues 238–242 (TSLLS) and 277–284 (EIVWREFC) each bind FAD. Interaction with DNA regions lie at residues 277–284 (EIVWREFC) and 343–344 (NR). 374–376 (DAD) is a binding site for FAD. Gln-406 is a binding site for DNA.

The protein belongs to the DNA photolyase class-3 family. Requires FAD as cofactor. The cofactor is (6R)-5,10-methylene-5,6,7,8-tetrahydrofolate.

It catalyses the reaction cyclobutadipyrimidine (in DNA) = 2 pyrimidine residues (in DNA).. In terms of biological role, photolyase involved in the repair of UV radiation-induced DNA damage. By using blue-light energy, catalyzes the photoreactivation of cyclobutane pyrimidine dimers (CPDs), which are formed between adjacent bases on the same DNA strand upon exposure to ultraviolet radiation. Can repair CPD lesions in ssDNA as well as in dsDNA. The polypeptide is Deoxyribodipyrimidine photo-lyase (Agrobacterium fabrum (strain C58 / ATCC 33970) (Agrobacterium tumefaciens (strain C58))).